The chain runs to 199 residues: MKIVLASNNRGKLAELRAMLAPLGFELITQGELGIPEAPEPYHTFVENALAKARHASAHSGLPALADDAGLCVDAFGGLPGVQTAFYATRFGYEKGDDNNVRALLEQMRDVDNRRAALVSTLVAVRSEQDPEPLIAVGRVVGEIARAPVGSHGFGFDPVMLIPEFGQTFAQLPVEVKNANSHRGRAARAMLALMRERWL.

7-12 (SNNRGK) provides a ligand contact to substrate. Asp68 (proton acceptor) is an active-site residue. Asp68 provides a ligand contact to Mg(2+). Substrate is bound by residues Ala69, 154 to 157 (FGFD), Lys177, and 182 to 183 (HR).

This sequence belongs to the HAM1 NTPase family. As to quaternary structure, homodimer. Mg(2+) serves as cofactor.

The catalysed reaction is XTP + H2O = XMP + diphosphate + H(+). It catalyses the reaction dITP + H2O = dIMP + diphosphate + H(+). The enzyme catalyses ITP + H2O = IMP + diphosphate + H(+). Its function is as follows. Pyrophosphatase that catalyzes the hydrolysis of nucleoside triphosphates to their monophosphate derivatives, with a high preference for the non-canonical purine nucleotides XTP (xanthosine triphosphate), dITP (deoxyinosine triphosphate) and ITP. Seems to function as a house-cleaning enzyme that removes non-canonical purine nucleotides from the nucleotide pool, thus preventing their incorporation into DNA/RNA and avoiding chromosomal lesions. This is dITP/XTP pyrophosphatase from Albidiferax ferrireducens (strain ATCC BAA-621 / DSM 15236 / T118) (Rhodoferax ferrireducens).